Here is a 76-residue protein sequence, read N- to C-terminus: Putative snRNP Sm-like protein (76 aa).

One can recognise a Sm domain in the interval 4 to 76 (RPLDVIHRSL…VLAISPVDIE (73 aa)).

This sequence belongs to the snRNP Sm proteins family.

The sequence is that of Putative snRNP Sm-like protein from Thermococcus gammatolerans (strain DSM 15229 / JCM 11827 / EJ3).